A 165-amino-acid chain; its full sequence is Type IV major pilin protein PilE1 (165 aa).

The propeptide at 1–7 (MNTLQKG) is leader sequence. N-methylphenylalanine is present on Phe-8. Residues 8–28 (FTLIELMIVIAIVGILAAVAL) form a helical membrane-spanning segment. The O-linked (DADDGlc) serine glycan is linked to Ser-70. Ser-75 bears the O-(2-aminoethylphosphoryl)serine; alternate mark. Residue Ser-75 is modified to O-(2-cholinephosphoryl)serine; alternate. Ser-75 is subject to Phosphoserine; alternate. The residue at position 101 (Ser-101) is an O-(sn-1-glycerophosphoryl)serine; partial. Cys-128 and Cys-158 are joined by a disulfide. The span at 137 to 153 (DDTVADAKDGKEIDTKH) shows a compositional bias: basic and acidic residues. Positions 137–165 (DDTVADAKDGKEIDTKHLPSTCRDNFDAK) are disordered.

The protein belongs to the N-Me-Phe pilin family. In terms of assembly, the pili are polar flexible filaments of about 5.4 nanometers diameter and 2.5 micrometers average length; they consist of only a single polypeptide chain arranged in a helical configuration of five subunits per turn in the assembled pilus. Post-translationally, the O-linked glycan identified as Gal-GlcNAc disaccharide in PubMed:7477282 and PubMed:10048019 is now identified as either a hexosyl-diacetamidotrideoxyhexoside (DATDHex) by mass spectrometry in PubMed:15249686, or alpha-D-galactopyranosyl-(1-&gt;3)-2,4-diacetamido-2,4-dideoxy-beta-D-glucopyranoside (DADDGlc) by X-ray diffraction in PubMed:16949362. It is not clear whether there is a chemical difference in the glycosylation of the two derivatives of strain MS11 used in these experiments, or not. In some MS11 derivative strains, Ser-75 is modified to O-(2-aminoethylphosphoryl)serine, and in some other derivatives that can be secondarily modified to O-(2-cholinephosphoryl)serine by N-methylation.

The protein resides in the fimbrium. It localises to the membrane. Major component of the type IV pilus (T4P) that plays a role in cellular adherence, microcolony formation, resistance to neutrophil mediated killing, twitching motility as well as transformation. Mediates the attachment and the formation of bacterial microcolonies on host epithelial cells. Mechanistically, pili retractation induces host NF-kappa-B activation in infected cells, which is temporally associated with the formation of gonococcal microcolonies. This is Type IV major pilin protein PilE1 (pilE1) from Neisseria gonorrhoeae.